The following is a 317-amino-acid chain: Ornithine carbamoyltransferase (317 aa).

Carbamoyl phosphate-binding positions include 54-57 (STRT), Gln-81, Arg-105, and 132-135 (HPCQ). Residues Asn-163, Asp-227, and 231–232 (SM) each bind L-ornithine. Carbamoyl phosphate-binding positions include 267-268 (CL) and Arg-295.

This sequence belongs to the aspartate/ornithine carbamoyltransferase superfamily. OTCase family.

The protein resides in the cytoplasm. The catalysed reaction is carbamoyl phosphate + L-ornithine = L-citrulline + phosphate + H(+). It functions in the pathway amino-acid biosynthesis; L-arginine biosynthesis; L-arginine from L-ornithine and carbamoyl phosphate: step 1/3. Its function is as follows. Reversibly catalyzes the transfer of the carbamoyl group from carbamoyl phosphate (CP) to the N(epsilon) atom of ornithine (ORN) to produce L-citrulline. The polypeptide is Ornithine carbamoyltransferase (Parafrankia sp. (strain EAN1pec)).